A 314-amino-acid polypeptide reads, in one-letter code: Glutathione synthetase (314 aa).

The ATP-grasp domain maps to 125-311 (EKIAAQLFPQ…IAGQLFDAIE (187 aa)). 151–208 (FVQKQEQAILKPLDGMGGHSIFRSSNGDPNLNVILETLTDGGRTLAIAQRYLQQIIEG) lines the ATP pocket. Glutamate 282 and asparagine 284 together coordinate Mg(2+).

This sequence belongs to the prokaryotic GSH synthase family. Mg(2+) is required as a cofactor. The cofactor is Mn(2+).

It carries out the reaction gamma-L-glutamyl-L-cysteine + glycine + ATP = glutathione + ADP + phosphate + H(+). It participates in sulfur metabolism; glutathione biosynthesis; glutathione from L-cysteine and L-glutamate: step 2/2. This is Glutathione synthetase from Xylella fastidiosa (strain Temecula1 / ATCC 700964).